We begin with the raw amino-acid sequence, 240 residues long: MSELSYRRILLKLSGEALMGDGDYGIDPKVINRLAHEVIEAQQAGAQVALVIGGGNIFRGAGLAASGMDRVTGDHMGMLATVINALAMQDALEKLGAKVRVMSAIKINDVCEDFIRRRAIRHLEKGRIAIFAAGTGNPFFTTDSGAALRAIEIGADLLLKATKVDGVYDKDPKKHTDAVRYDSLTYDQVILQGLEVMDTAAFALARDSDLPLRIFGMSEPGVLLRILHGEQIGTLVQGRS.

12–15 (KLSG) provides a ligand contact to ATP. Gly-54 lines the UMP pocket. 2 residues coordinate ATP: Gly-55 and Arg-59. UMP is bound by residues Asp-74 and 135-142 (TGNPFFTT). The ATP site is built by Thr-162, Tyr-168, and Asp-171.

It belongs to the UMP kinase family. As to quaternary structure, homohexamer.

It localises to the cytoplasm. The enzyme catalyses UMP + ATP = UDP + ADP. It functions in the pathway pyrimidine metabolism; CTP biosynthesis via de novo pathway; UDP from UMP (UMPK route): step 1/1. Its activity is regulated as follows. Inhibited by UTP. Functionally, catalyzes the reversible phosphorylation of UMP to UDP. The polypeptide is Uridylate kinase (Xanthomonas euvesicatoria pv. vesicatoria (strain 85-10) (Xanthomonas campestris pv. vesicatoria)).